Here is a 133-residue protein sequence, read N- to C-terminus: Ribonuclease P protein component (133 aa).

It belongs to the RnpA family. As to quaternary structure, consists of a catalytic RNA component (M1 or rnpB) and a protein subunit.

The enzyme catalyses Endonucleolytic cleavage of RNA, removing 5'-extranucleotides from tRNA precursor.. Its function is as follows. RNaseP catalyzes the removal of the 5'-leader sequence from pre-tRNA to produce the mature 5'-terminus. It can also cleave other RNA substrates such as 4.5S RNA. The protein component plays an auxiliary but essential role in vivo by binding to the 5'-leader sequence and broadening the substrate specificity of the ribozyme. The sequence is that of Ribonuclease P protein component from Pseudomonas fluorescens (strain Pf0-1).